A 155-amino-acid chain; its full sequence is Endoribonuclease YbeY (155 aa).

Positions 117, 121, and 127 each coordinate Zn(2+).

Belongs to the endoribonuclease YbeY family. It depends on Zn(2+) as a cofactor.

It localises to the cytoplasm. Its function is as follows. Single strand-specific metallo-endoribonuclease involved in late-stage 70S ribosome quality control and in maturation of the 3' terminus of the 16S rRNA. This Psychrobacter cryohalolentis (strain ATCC BAA-1226 / DSM 17306 / VKM B-2378 / K5) protein is Endoribonuclease YbeY.